A 326-amino-acid chain; its full sequence is Probable cell division protein WhiA (326 aa).

The segment at residues 275-308 (SLEELGQLAEPPMTKDAVAGRIRRLLAMADKRAR) is a DNA-binding region (H-T-H motif).

This sequence belongs to the WhiA family.

Its function is as follows. Involved in cell division and chromosome segregation. This Saccharopolyspora erythraea (strain ATCC 11635 / DSM 40517 / JCM 4748 / NBRC 13426 / NCIMB 8594 / NRRL 2338) protein is Probable cell division protein WhiA.